Consider the following 325-residue polypeptide: Eukaryotic translation initiation factor 3 subunit I (325 aa).

5 WD repeats span residues 1-39 (MKPILLQGHERSITQIKYNREGDLLFTVAKDPIVNVWYS), 43-81 (ERLGTYMGHTGAVWCVDADWDTKHVLTGSADNSCRLWDC), 87-127 (LALL…FFDL), 135-175 (NNEP…QYSA), and 180-217 (VLVNVKEHSRQINDIQLSRDMTMFVTASKDNTAKLFDS). T219 is modified (phosphothreonine). WD repeat units lie at residues 221–267 (EHQK…KFEA) and 275–316 (EEEF…YFDP). Position 264 is an N6-acetyllysine (K264). Residue K282 forms a Glycyl lysine isopeptide (Lys-Gly) (interchain with G-Cter in ubiquitin) linkage. Phosphotyrosine is present on Y308.

In terms of assembly, component of the eukaryotic translation initiation factor 3 (eIF-3) complex, which is composed of 13 subunits: EIF3A, EIF3B, EIF3C, EIF3D, EIF3E, EIF3F, EIF3G, EIF3H, EIF3I, EIF3J, EIF3K, EIF3L and EIF3M. The eIF-3 complex appears to include 3 stable modules: module A is composed of EIF3A, EIF3B, EIF3G and EIF3I; module B is composed of EIF3F, EIF3H, and EIF3M; and module C is composed of EIF3C, EIF3D, EIF3E, EIF3K and EIF3L. EIF3C of module C binds EIF3B of module A and EIF3H of module B, thereby linking the three modules. EIF3J is a labile subunit that binds to the eIF-3 complex via EIF3B. The eIF-3 complex interacts with RPS6KB1 under conditions of nutrient depletion. Mitogenic stimulation leads to binding and activation of a complex composed of MTOR and RPTOR, leading to phosphorylation and release of RPS6KB1 and binding of EIF4B to eIF-3. Post-translationally, phosphorylated by TGF-beta type II receptor.

The protein localises to the cytoplasm. Component of the eukaryotic translation initiation factor 3 (eIF-3) complex, which is required for several steps in the initiation of protein synthesis. The eIF-3 complex associates with the 40S ribosome and facilitates the recruitment of eIF-1, eIF-1A, eIF-2:GTP:methionyl-tRNAi and eIF-5 to form the 43S pre-initiation complex (43S PIC). The eIF-3 complex stimulates mRNA recruitment to the 43S PIC and scanning of the mRNA for AUG recognition. The eIF-3 complex is also required for disassembly and recycling of post-termination ribosomal complexes and subsequently prevents premature joining of the 40S and 60S ribosomal subunits prior to initiation. The eIF-3 complex specifically targets and initiates translation of a subset of mRNAs involved in cell proliferation, including cell cycling, differentiation and apoptosis, and uses different modes of RNA stem-loop binding to exert either translational activation or repression. The protein is Eukaryotic translation initiation factor 3 subunit I of Homo sapiens (Human).